A 96-amino-acid polypeptide reads, in one-letter code: UPF0235 protein YggU (96 aa).

The protein belongs to the UPF0235 family.

The sequence is that of UPF0235 protein YggU from Salmonella newport (strain SL254).